The chain runs to 173 residues: Co-chaperone protein HscB homolog (173 aa).

The J domain occupies 3-75; it reads NPFSLFNLPV…IARATAIIEI (73 aa).

This sequence belongs to the HscB family. In terms of assembly, interacts with HscA and stimulates its ATPase activity.

Its function is as follows. Co-chaperone involved in the maturation of iron-sulfur cluster-containing proteins. Seems to help targeting proteins to be folded toward HscA. The sequence is that of Co-chaperone protein HscB homolog from Haemophilus ducreyi (strain 35000HP / ATCC 700724).